The sequence spans 56 residues: Bowman-Birk type proteinase inhibitor I-2B (56 aa).

4 disulfide bridges follow: cysteine 10–cysteine 25, cysteine 15–cysteine 23, cysteine 32–cysteine 39, and cysteine 36–cysteine 51.

Belongs to the Bowman-Birk serine protease inhibitor family.

The polypeptide is Bowman-Birk type proteinase inhibitor I-2B (Triticum aestivum (Wheat)).